The primary structure comprises 268 residues: Undecaprenyl-diphosphatase (268 aa).

Helical transmembrane passes span 7–27, 87–107, 116–136, 146–166, 187–207, 210–230, and 247–267; these read IFNAIILGIVEGITEFFPISS, LIYHHIILGNIPIIFIGLCIY, FYSIIYALIFGTILLILTEIS, IETPQILIIGIFQCLALWPGF, VEFSFILSVPIFFGASVLDVI, FYDISINNIPMLFSGFLSAFI, and SLIPFIIYRSILSIIIYLFFM.

The protein belongs to the UppP family.

It localises to the cell membrane. It catalyses the reaction di-trans,octa-cis-undecaprenyl diphosphate + H2O = di-trans,octa-cis-undecaprenyl phosphate + phosphate + H(+). In terms of biological role, catalyzes the dephosphorylation of undecaprenyl diphosphate (UPP). Confers resistance to bacitracin. In Buchnera aphidicola subsp. Baizongia pistaciae (strain Bp), this protein is Undecaprenyl-diphosphatase.